Here is a 277-residue protein sequence, read N- to C-terminus: Thymidylate synthase (277 aa).

Arg21 contacts dUMP. (6R)-5,10-methylene-5,6,7,8-tetrahydrofolate is bound at residue His51. DUMP is bound at residue 126-127; that stretch reads RR. Cys159 functions as the Nucleophile in the catalytic mechanism. Residues 179 to 182, Asn190, and 220 to 222 contribute to the dUMP site; these read RSAD and HLY. Asp182 is a binding site for (6R)-5,10-methylene-5,6,7,8-tetrahydrofolate. Ser276 contacts (6R)-5,10-methylene-5,6,7,8-tetrahydrofolate.

This sequence belongs to the thymidylate synthase family. Bacterial-type ThyA subfamily. Homodimer.

It localises to the cytoplasm. It catalyses the reaction dUMP + (6R)-5,10-methylene-5,6,7,8-tetrahydrofolate = 7,8-dihydrofolate + dTMP. Its pathway is pyrimidine metabolism; dTTP biosynthesis. In terms of biological role, catalyzes the reductive methylation of 2'-deoxyuridine-5'-monophosphate (dUMP) to 2'-deoxythymidine-5'-monophosphate (dTMP) while utilizing 5,10-methylenetetrahydrofolate (mTHF) as the methyl donor and reductant in the reaction, yielding dihydrofolate (DHF) as a by-product. This enzymatic reaction provides an intracellular de novo source of dTMP, an essential precursor for DNA biosynthesis. The polypeptide is Thymidylate synthase (Hydrogenovibrio crunogenus (strain DSM 25203 / XCL-2) (Thiomicrospira crunogena)).